We begin with the raw amino-acid sequence, 351 residues long: Transcriptional activator POG1 (351 aa).

A compositionally biased stretch (basic and acidic residues) spans 1–27 (MKQEPHRQSEEKEKPKGPMAVEREHHT). Residues 1-56 (MKQEPHRQSEEKEKPKGPMAVEREHHTSLSSGTTMTASTGDESTNSRPVESSQTEK) are disordered. Polar residues predominate over residues 28–56 (SLSSGTTMTASTGDESTNSRPVESSQTEK). Phosphoserine is present on residues Ser152 and Ser168. Disordered stretches follow at residues 237 to 256 (GPQA…TPVM) and 280 to 351 (SMGP…PPPT). 2 stretches are compositionally biased toward polar residues: residues 241–256 (QLPT…TPVM) and 287–296 (IYGQQHQPQP). Phosphoserine is present on Ser314.

It belongs to the POG1 family. In terms of processing, phosphorylated by CDC28.

Its subcellular location is the nucleus. Functionally, transcriptional activator which promotes cell cycle recovery with CLN2, after pheromone induced G1 arrest, probably inhibiting the ability of STE20 to activate the pheromone response pathway. Binds the promoters of genes that function in cell cycle regulation, cytoskeletal organization, and spindle assembly. May also be involved in stress-resistance. The chain is Transcriptional activator POG1 (POG1) from Saccharomyces cerevisiae (strain YJM789) (Baker's yeast).